A 638-amino-acid polypeptide reads, in one-letter code: LIM domain kinase 2 (638 aa).

LIM zinc-binding domains are found at residues 12-63 (CRGC…CHKD) and 72-124 (CHGC…CGKC). The 88-residue stretch at 152–239 (LISMPATTEC…TLQLLIEHDP (88 aa)) folds into the PDZ domain. Threonine 210 is modified (phosphothreonine). Positions 255-304 (PHMQSTGHTLMLSTLDTKENQEGTLRRRSLRRSNSISKSPGPSSPKEPLL) are disordered. A compositionally biased stretch (polar residues) spans 257–269 (MQSTGHTLMLSTL). Positions 270–279 (DTKENQEGTL) are enriched in basic and acidic residues. Over residues 286–304 (RSNSISKSPGPSSPKEPLL) the composition is skewed to low complexity. Phosphoserine is present on residues serine 293 and serine 298. A Protein kinase domain is found at 331–608 (LIHGEVLGKG…DSFEALSLFL (278 aa)). ATP is bound by residues 337-345 (LGKGFFGQA) and lysine 360. Aspartate 451 is a catalytic residue. Threonine 505 carries the post-translational modification Phosphothreonine; by ROCK1 and CDC42BP.

The protein belongs to the protein kinase superfamily. TKL Ser/Thr protein kinase family. Binds ROCK1 and MARF1. Interacts with NISCH. Post-translationally, phosphorylated on serine and/or threonine residues by ROCK1. In terms of tissue distribution, specifically expressed in the testes.

The protein localises to the cytoplasm. It is found in the cytoskeleton. It localises to the spindle. The protein resides in the microtubule organizing center. Its subcellular location is the centrosome. The protein localises to the nucleus. It is found in the perinuclear region. It catalyses the reaction L-seryl-[protein] + ATP = O-phospho-L-seryl-[protein] + ADP + H(+). The enzyme catalyses L-threonyl-[protein] + ATP = O-phospho-L-threonyl-[protein] + ADP + H(+). Functionally, serine/threonine-protein kinase that plays an essential role in the regulation of actin filament dynamics. Acts downstream of several Rho family GTPase signal transduction pathways. Involved in astral microtubule organization and mitotic spindle orientation during early stages of mitosis by mediating phosphorylation of TPPP. Displays serine/threonine-specific phosphorylation of myelin basic protein and histone (MBP) in vitro. Suppresses ciliogenesis via multiple pathways; phosphorylation of CFL1, suppression of directional trafficking of ciliary vesicles to the ciliary base, and by facilitating YAP1 nuclear localization where it acts as a transcriptional corepressor of the TEAD4 target genes AURKA and PLK1. The sequence is that of LIM domain kinase 2 (Limk2) from Mus musculus (Mouse).